The chain runs to 977 residues: Aspartate, glycine, lysine and serine-rich protein (977 aa).

The segment at 23-116 (GVLPDVDSGF…PITNLGSSTS (94 aa)) is disordered. Over residues 37–50 (EETKSEPKQPDTKP) the composition is skewed to basic and acidic residues. Over residues 51–63 (EQPSVSKPDSSVN) the composition is skewed to polar residues. A glycan (N-linked (GlcNAc...) asparagine) is linked at asparagine 136. Disordered stretches follow at residues 246-767 (AGGG…TSRG) and 780-922 (GGGK…GSGL). Residues 251 to 278 (YYSDSSDSSDSDSSGSDSSESGSSESGS) are compositionally biased toward low complexity. A compositionally biased stretch (polar residues) spans 309–325 (NGSPDNGTPGSGSSRYT). Residues 410–427 (LEDELLGSDSSDEDDIDD) are compositionally biased toward acidic residues. A compositionally biased stretch (gly residues) spans 428–443 (GLGGLGLGAGPGGPGG). Composition is skewed to basic residues over residues 447–457 (TPKHKPRTDKK) and 465–540 (KRKP…VQRK). Basic and acidic residues predominate over residues 541–557 (QPREYKQESPEVEREHS). Residues 572-583 (KILITSLTSSRG) are compositionally biased toward low complexity. A compositionally biased stretch (gly residues) spans 591-643 (DGSGSGNGGGDDGNGGGAGNGGGAGNGGGAGNGGGAGNGGGNGGGGNGGGGND). A compositionally biased stretch (basic and acidic residues) spans 660–675 (EHRNRCEDDDDYREKC). Low complexity predominate over residues 700-724 (SGSSSSSSATESESSSTSTTPSTSS). Composition is skewed to polar residues over residues 730 to 744 (ILST…TRSG), 758 to 767 (SRPSVATSRG), and 785 to 801 (STGT…TSSA). 3 stretches are compositionally biased toward low complexity: residues 803 to 814 (GLDLSGLLGQLG), 822 to 857 (GPKP…GLLG), and 870 to 907 (KKPT…KLSP).

In terms of tissue distribution, component of the acid-insoluble and acid-soluble organic matrix of calcified layers of the shell (at protein level).

It is found in the secreted. The protein is Aspartate, glycine, lysine and serine-rich protein of Lottia gigantea (Giant owl limpet).